Consider the following 111-residue polypeptide: Large ribosomal subunit protein uL24 (111 aa).

The protein belongs to the universal ribosomal protein uL24 family. Part of the 50S ribosomal subunit.

In terms of biological role, one of two assembly initiator proteins, it binds directly to the 5'-end of the 23S rRNA, where it nucleates assembly of the 50S subunit. One of the proteins that surrounds the polypeptide exit tunnel on the outside of the subunit. The chain is Large ribosomal subunit protein uL24 from Heliobacterium modesticaldum (strain ATCC 51547 / Ice1).